The primary structure comprises 555 residues: Formate--tetrahydrofolate ligase (555 aa).

65 to 72 serves as a coordination point for ATP; sequence TPAGEGKS.

It belongs to the formate--tetrahydrofolate ligase family.

It catalyses the reaction (6S)-5,6,7,8-tetrahydrofolate + formate + ATP = (6R)-10-formyltetrahydrofolate + ADP + phosphate. The protein operates within one-carbon metabolism; tetrahydrofolate interconversion. This Staphylococcus aureus (strain Mu3 / ATCC 700698) protein is Formate--tetrahydrofolate ligase.